The primary structure comprises 250 residues: MSILFISDVHLSTKSPYITDGFLRFLSYRAMRAKALYILGDLFETWLGDDDYNLLHINIAKALKALNQRRISCYFIHGNHDFLLGQRYARACGMTLLSSNQVLKLASGKKIIILHGDILCANDNSYQLFRKYLRHIIVQRLFLSLPLSIRSRIFSAIRSCCVQHTKYKSKKKLNINLKIATDMLIQNNADIMIHGHTHQPAIHKIYRSKKNVFRIIVLGCWNKYGSMIEVNEKNNDILFTEFPLYEITKY.

5 residues coordinate Mn(2+): Asp8, His10, Asp41, Asn79, and His115. 79-80 (NH) serves as a coordination point for substrate. Substrate is bound by residues Asp123, Thr165, Lys168, and His196. Residues His196 and His198 each coordinate Mn(2+).

This sequence belongs to the LpxH family. Mn(2+) is required as a cofactor.

The protein resides in the cell inner membrane. It catalyses the reaction UDP-2-N,3-O-bis[(3R)-3-hydroxytetradecanoyl]-alpha-D-glucosamine + H2O = 2-N,3-O-bis[(3R)-3-hydroxytetradecanoyl]-alpha-D-glucosaminyl 1-phosphate + UMP + 2 H(+). It participates in glycolipid biosynthesis; lipid IV(A) biosynthesis; lipid IV(A) from (3R)-3-hydroxytetradecanoyl-[acyl-carrier-protein] and UDP-N-acetyl-alpha-D-glucosamine: step 4/6. Hydrolyzes the pyrophosphate bond of UDP-2,3-diacylglucosamine to yield 2,3-diacylglucosamine 1-phosphate (lipid X) and UMP by catalyzing the attack of water at the alpha-P atom. Involved in the biosynthesis of lipid A, a phosphorylated glycolipid that anchors the lipopolysaccharide to the outer membrane of the cell. The sequence is that of UDP-2,3-diacylglucosamine hydrolase from Blochmanniella pennsylvanica (strain BPEN).